The sequence spans 500 residues: Nitrate/nitrite transporter NrtP (500 aa).

The next 12 helical transmembrane spans lie at 19 to 39 (WFAF…ATTI), 52 to 72 (TLGI…GMLL), 79 to 99 (ITYS…ALAQ), 109 to 129 (LLMG…AEWF), 147 to 167 (FGAF…SFFS), 175 to 195 (LAIA…YNTV), 220 to 240 (SFWA…LLAW), 247 to 267 (IHFL…GLFA), 364 to 384 (WTMT…HFIN), 389 to 409 (IPVA…GCGA), 425 to 445 (IAGN…TIFS), and 451 to 471 (TLFS…AFFL).

This sequence belongs to the major facilitator superfamily. Nitrate/nitrite porter (TC 2.A.1.8) family.

It is found in the cell inner membrane. In terms of biological role, transport system for both nitrate and nitrite, with much higher affinity for nitrate than for nitrite. This is Nitrate/nitrite transporter NrtP from Nostoc punctiforme (strain ATCC 29133 / PCC 73102).